The chain runs to 140 residues: Large ribosomal subunit protein uL11 (140 aa).

Belongs to the universal ribosomal protein uL11 family. Part of the ribosomal stalk of the 50S ribosomal subunit. Interacts with L10 and the large rRNA to form the base of the stalk. L10 forms an elongated spine to which L12 dimers bind in a sequential fashion forming a multimeric L10(L12)X complex. One or more lysine residues are methylated.

Its function is as follows. Forms part of the ribosomal stalk which helps the ribosome interact with GTP-bound translation factors. The chain is Large ribosomal subunit protein uL11 from Brachyspira hyodysenteriae (strain ATCC 49526 / WA1).